Consider the following 370-residue polypeptide: Adaptive-response sensory kinase SasA (370 aa).

A Histidine kinase domain is found at 152-365 (MVAHELRTPL…CFYLTVPVWQ (214 aa)). At histidine 155 the chain carries Phosphohistidine; by autocatalysis.

Homooligomerizes. Interacts with KaiC. Participates in the KaiBC complex, whose core is composed of a KaiC homohexamer and 6 KaiB.

It catalyses the reaction ATP + protein L-histidine = ADP + protein N-phospho-L-histidine.. Member of the two-component regulatory system SasA/RpaA involved in genome-wide circadian gene expression. One of several clock output pathways. Participates in the Kai clock protein complex, the main circadian regulator in cyanobacteria, via its interaction with KaiC. KaiC enhances the autophosphorylation activity of SasA, which then transfers its phosphate group to RpaA to activate it. In addition to its output function, recruits fold-shifted KaiB (KaiB(fs)) to KaiC to cooperatively form the KaiB(6):KaiC(6) complex (independent of SasA kinase activity). Required for robustness of the circadian rhythm of gene expression and is involved in clock output, also required for adaptation to light/dark cycles. The protein is Adaptive-response sensory kinase SasA of Prochlorococcus marinus (strain MIT 9313).